The primary structure comprises 68 residues: Large ribosomal subunit protein uL30 (68 aa).

The interval 1–26 (MSAKKSASKATVTVQQIGSPLRREPS) is disordered. Polar residues predominate over residues 8–18 (SKATVTVQQIG).

It belongs to the universal ribosomal protein uL30 family. Part of the 50S ribosomal subunit.

The protein is Large ribosomal subunit protein uL30 of Parvibaculum lavamentivorans (strain DS-1 / DSM 13023 / NCIMB 13966).